A 268-amino-acid chain; its full sequence is L-cystine-binding protein TcyA (268 aa).

A signal peptide spans 1-19 (MKKALLALFMVVSIAALAA). Cysteine 20 carries N-palmitoyl cysteine lipidation. Cysteine 20 carries the S-diacylglycerol cysteine lipid modification.

The protein belongs to the bacterial solute-binding protein 3 family. The complex is composed of two ATP-binding proteins (TcyC), two transmembrane proteins (TcyB) and a solute-binding protein (TcyA).

It localises to the cell membrane. Functionally, part of the ABC transporter complex TcyABC involved in L-cystine import. In Bacillus subtilis (strain 168), this protein is L-cystine-binding protein TcyA (tcyA).